Here is a 216-residue protein sequence, read N- to C-terminus: Phosphoribosylaminoimidazole-succinocarboxamide synthase (216 aa).

The protein belongs to the SAICAR synthetase family.

The catalysed reaction is 5-amino-1-(5-phospho-D-ribosyl)imidazole-4-carboxylate + L-aspartate + ATP = (2S)-2-[5-amino-1-(5-phospho-beta-D-ribosyl)imidazole-4-carboxamido]succinate + ADP + phosphate + 2 H(+). It participates in purine metabolism; IMP biosynthesis via de novo pathway; 5-amino-1-(5-phospho-D-ribosyl)imidazole-4-carboxamide from 5-amino-1-(5-phospho-D-ribosyl)imidazole-4-carboxylate: step 1/2. The chain is Phosphoribosylaminoimidazole-succinocarboxamide synthase (purC) from Aquifex aeolicus (strain VF5).